The sequence spans 251 residues: Protein PBMUCL2 (251 aa).

Positions 1–22 (MPRYVPLLLLLLLLRCSERGGG) are cleaved as a signal peptide. Disordered regions lie at residues 36 to 55 (WRDG…DRAS) and 65 to 251 (LSQS…THLL). Residues 72–87 (KHPETSPKDSRIREND) show a composition bias toward basic and acidic residues. Asparagine 120 is a glycosylation site (N-linked (GlcNAc...) asparagine). Residues 150–164 (TKDSVTADPGTTENF) are compositionally biased toward polar residues. The tract at residues 153–251 (SVTADPGTTE…TTKHGDTHLL (99 aa)) is 15 X 11 AA approximate repeats. Residues 241–251 (ETTKHGDTHLL) are compositionally biased toward basic and acidic residues.

Detected in the brain, lung, spleen, thymus and prostate.

It localises to the secreted. The sequence is that of Protein PBMUCL2 (HCG22) from Homo sapiens (Human).